A 264-amino-acid polypeptide reads, in one-letter code: Thymidylate synthase (264 aa).

Residue arginine 21 coordinates dUMP. Residue histidine 51 coordinates (6R)-5,10-methylene-5,6,7,8-tetrahydrofolate. 126–127 is a dUMP binding site; sequence RR. The active-site Nucleophile is the cysteine 146. DUMP is bound by residues 166-169, asparagine 177, and 207-209; these read RSAD and HLY. Position 169 (aspartate 169) interacts with (6R)-5,10-methylene-5,6,7,8-tetrahydrofolate. Alanine 263 is a binding site for (6R)-5,10-methylene-5,6,7,8-tetrahydrofolate.

The protein belongs to the thymidylate synthase family. Bacterial-type ThyA subfamily. As to quaternary structure, homodimer.

The protein localises to the cytoplasm. It catalyses the reaction dUMP + (6R)-5,10-methylene-5,6,7,8-tetrahydrofolate = 7,8-dihydrofolate + dTMP. It participates in pyrimidine metabolism; dTTP biosynthesis. In terms of biological role, catalyzes the reductive methylation of 2'-deoxyuridine-5'-monophosphate (dUMP) to 2'-deoxythymidine-5'-monophosphate (dTMP) while utilizing 5,10-methylenetetrahydrofolate (mTHF) as the methyl donor and reductant in the reaction, yielding dihydrofolate (DHF) as a by-product. This enzymatic reaction provides an intracellular de novo source of dTMP, an essential precursor for DNA biosynthesis. This Chelativorans sp. (strain BNC1) protein is Thymidylate synthase.